Consider the following 188-residue polypeptide: UPF0340 protein GK3370 (188 aa).

Belongs to the UPF0340 family.

This Geobacillus kaustophilus (strain HTA426) protein is UPF0340 protein GK3370.